Reading from the N-terminus, the 212-residue chain is Adenylate kinase (212 aa).

Residue 10-15 (GAGKGT) coordinates ATP. Residues 30–59 (STGDMFRAAMANQTEMGRLAKSYIDKGELV) form an NMP region. AMP contacts are provided by residues T31, R36, 57-59 (ELV), 86-89 (GYPR), and Q93. The tract at residues 127–159 (GRIINRKTGETFHKVFNPPVDYKEEDYYQREDD) is LID. ATP-binding positions include R128 and 137–138 (TF). R156 and R167 together coordinate AMP. Residue Q195 participates in ATP binding.

This sequence belongs to the adenylate kinase family. As to quaternary structure, monomer.

It localises to the cytoplasm. It catalyses the reaction AMP + ATP = 2 ADP. It participates in purine metabolism; AMP biosynthesis via salvage pathway; AMP from ADP: step 1/1. Functionally, catalyzes the reversible transfer of the terminal phosphate group between ATP and AMP. Plays an important role in cellular energy homeostasis and in adenine nucleotide metabolism. The sequence is that of Adenylate kinase from Streptococcus agalactiae serotype III (strain NEM316).